The following is a 122-amino-acid chain: Serum amyloid A-2 protein (122 aa).

Residues M1–S18 form the signal peptide. Q19 is modified (pyrrolidone carboxylic acid). Residues A100 to Y122 are disordered.

The protein belongs to the SAA family. In terms of assembly, apolipoprotein of the HDL complex. As to expression, expressed by the liver; secreted in plasma.

The protein resides in the secreted. Major acute phase reactant. In Mesocricetus auratus (Golden hamster), this protein is Serum amyloid A-2 protein (SAA2).